We begin with the raw amino-acid sequence, 627 residues long: Altered inheritance of mitochondria protein 9, mitochondrial (627 aa).

The N-terminal 43 residues, 1–43 (MIRYTVAGHSRRCVVGASKRVGAIKCITVAATKRFISNKPNEV), are a transit peptide targeting the mitochondrion.

It belongs to the AIM9 family.

Its subcellular location is the mitochondrion. In Saccharomyces cerevisiae (strain RM11-1a) (Baker's yeast), this protein is Altered inheritance of mitochondria protein 9, mitochondrial (AIM9).